We begin with the raw amino-acid sequence, 109 residues long: MPRTIVAILVLAVVALGASYGFVQSYRALGIAQGEIKRQTARAEALEVRYATLQRHVKEVAARTNTQRQEVDRALDQNRPWADRPVPAAVVDSLCNRPGARCAVRTPTD.

A helical; Signal-anchor for type II membrane protein transmembrane segment spans residues 1 to 17 (MPRTIVAILVLAVVALG). Positions 27 to 63 (RALGIAQGEIKRQTARAEALEVRYATLQRHVKEVAAR) form a coiled coil.

In terms of assembly, interacts (via C-terminus) with the spanin outer lipoprotein subunit (via C-terminus). Part of the spanin complex which spans the entire periplasmic space. The spanin complex is composed of spanin inner membrane subunit and spanin outer membrane subunit.

Its subcellular location is the host cell inner membrane. Component of the spanin complex that disrupts the host outer membrane and participates in cell lysis during virus exit. The spanin complex conducts the final step in host lysis by disrupting the outer membrane after holin and endolysin action have permeabilized the inner membrane and degraded the host peptidoglycans. Host outer membrane disruption is possibly due to local fusion between the inner and outer membrane performed by the spanin complex. The polypeptide is Probable spanin, inner membrane subunit (Pseudomonas aeruginosa).